The following is a 123-amino-acid chain: Small ribosomal subunit protein uS12 (123 aa).

Residue aspartate 89 is modified to 3-methylthioaspartic acid.

This sequence belongs to the universal ribosomal protein uS12 family. In terms of assembly, part of the 30S ribosomal subunit. Contacts proteins S8 and S17. May interact with IF1 in the 30S initiation complex.

Its function is as follows. With S4 and S5 plays an important role in translational accuracy. Interacts with and stabilizes bases of the 16S rRNA that are involved in tRNA selection in the A site and with the mRNA backbone. Located at the interface of the 30S and 50S subunits, it traverses the body of the 30S subunit contacting proteins on the other side and probably holding the rRNA structure together. The combined cluster of proteins S8, S12 and S17 appears to hold together the shoulder and platform of the 30S subunit. This is Small ribosomal subunit protein uS12 from Rhodopseudomonas palustris (strain HaA2).